The primary structure comprises 483 residues: Regulatory protein ViaA (483 aa).

It belongs to the ViaA family. As to quaternary structure, homodimer. Interacts with RavA.

Its subcellular location is the cytoplasm. In terms of biological role, component of the RavA-ViaA chaperone complex, which may act on the membrane to optimize the function of some of the respiratory chains. ViaA stimulates the ATPase activity of RavA. In Escherichia coli O17:K52:H18 (strain UMN026 / ExPEC), this protein is Regulatory protein ViaA.